Reading from the N-terminus, the 437-residue chain is 3-ketoacyl-CoA thiolase (437 aa).

Cys-99 (acyl-thioester intermediate) is an active-site residue. Active-site proton acceptor residues include His-392 and Cys-422.

It belongs to the thiolase-like superfamily. Thiolase family. As to quaternary structure, heterotetramer of two alpha chains (FadJ) and two beta chains (FadI).

The protein localises to the cytoplasm. The enzyme catalyses an acyl-CoA + acetyl-CoA = a 3-oxoacyl-CoA + CoA. Its pathway is lipid metabolism; fatty acid beta-oxidation. Functionally, catalyzes the final step of fatty acid oxidation in which acetyl-CoA is released and the CoA ester of a fatty acid two carbons shorter is formed. This chain is 3-ketoacyl-CoA thiolase, found in Pectobacterium atrosepticum (strain SCRI 1043 / ATCC BAA-672) (Erwinia carotovora subsp. atroseptica).